We begin with the raw amino-acid sequence, 221 residues long: Chalcone--flavanone isomerase 2 (221 aa).

Threonine 50, asparagine 115, and serine 192 together coordinate substrate.

It belongs to the chalcone isomerase family.

The catalysed reaction is a chalcone = a flavanone.. Its pathway is secondary metabolite biosynthesis; flavonoid biosynthesis. In terms of biological role, catalyzes the intramolecular cyclization of bicyclic chalcones into tricyclic (S)-flavanones. Responsible for the isomerization of 4,2',4',6'-tetrahydroxychalcone (also termed chalcone) into naringenin. The protein is Chalcone--flavanone isomerase 2 (CHI2) of Lotus japonicus (Lotus corniculatus var. japonicus).